The chain runs to 2237 residues: Activating signal cointegrator 1 complex subunit 3-like (2237 aa).

4 disordered regions span residues 1 to 48, 71 to 118, 242 to 330, and 445 to 472; these read MSEE…RGEM, TIEK…KPID, DEEE…SKLI, and EKTIEKTESNKKDVEMKQQQQQQQDEIK. A compositionally biased stretch (basic and acidic residues) spans 24–37; it reads ERNRSELKEPKGEP. Residues 79-97 show a composition bias toward polar residues; the sequence is VNSSNDTYSTTKKVKNQNP. The segment covering 105–114 has biased composition (low complexity); the sequence is RKSNGNNNNE. Residues 242–282 are compositionally biased toward acidic residues; it reads DEEEEEENLSDFEIRDDDDDDDDVDNNEVDDNNNNDSEAQD. 2 stretches are compositionally biased toward basic and acidic residues: residues 312–325 and 446–460; these read QKPDTKNTKDDKNN and KTIEKTESNKKDVEM. Residues 440–468 adopt a coiled-coil conformation; it reads TAATTEKTIEKTESNKKDVEMKQQQQQQQ. The 185-residue stretch at 561 to 745 folds into the Helicase ATP-binding 1 domain; that stretch reads DCAFKTDNNL…FLRVEPDGVF (185 aa). 574 to 581 is an ATP binding site; that stretch reads APTSSGKT. Positions 687 to 690 match the DEAH box motif; that stretch reads DEIH. One can recognise a Helicase C-terminal 1 domain in the interval 755–990; the sequence is PLEQQYIGIS…TVRDAVNWLG (236 aa). The SEC63 1 domain maps to 1050–1356; that stretch reads STELGKVASH…GAEYSLPISF (307 aa). The region spanning 1407–1584 is the Helicase ATP-binding 2 domain; that stretch reads NCMYQSNDNA…WIGATPQTCY (178 aa). 1420–1427 lines the ATP pocket; it reads APTNSGKT. Positions 1526-1529 match the DEAH box motif; sequence DELH. In terms of domain architecture, Helicase C-terminal 2 spans 1657–1832; it reads TLTKPYLVCE…TITKKQDALD (176 aa). Positions 1892 to 2215 constitute an SEC63 2 domain; the sequence is PLNLGIIASY…GCDQEHELNI (324 aa).

The protein belongs to the helicase family.

This Dictyostelium discoideum (Social amoeba) protein is Activating signal cointegrator 1 complex subunit 3-like (ascc3l).